A 287-amino-acid polypeptide reads, in one-letter code: DDRGK domain-containing protein 1 (287 aa).

The Lumenal segment spans residues 1–5; it reads MDLIL. The helical transmembrane segment at 6-26 threads the bilayer; that stretch reads LLGIAVALLVILVTLFFFTKG. Residues 27–287 lie on the Cytoplasmic side of the membrane; sequence KGSQESGKYN…LINLVPVSAE (261 aa). 2 disordered regions span residues 28–102 and 135–164; these read GSQE…KRAK and KVEAEKEAEEERKREEAEKKAREEKARQEH. Positions 44–68 are enriched in low complexity; sequence AQAAPRRAQVVRNQRNRARVAAAPA. The span at 85 to 102 shows a compositional bias: basic and acidic residues; sequence IPHADFNGEKMGAKKRAK.

It belongs to the DDRGK1 family. In terms of assembly, interacts with Atg9; the interaction is transient.

The protein resides in the endoplasmic reticulum membrane. In terms of biological role, substrate adapter for ufmylation, the covalent attachment of the ubiquitin-like modifier UFM1 to substrate proteins. Required for ufmylation of Atg9; protects the nervous system during aging, possibly by stabilizing Atg9 and supporting its function. This Culex quinquefasciatus (Southern house mosquito) protein is DDRGK domain-containing protein 1.